We begin with the raw amino-acid sequence, 91 residues long: YcgL domain-containing protein Ent638_2370 (91 aa).

In terms of domain architecture, YcgL spans 1-85 (MFCVIYRSAK…PPENLLKQHL (85 aa)).

In Enterobacter sp. (strain 638), this protein is YcgL domain-containing protein Ent638_2370.